We begin with the raw amino-acid sequence, 207 residues long: Superoxide dismutase [Mn] (207 aa).

Mn(2+) contacts are provided by H28, H76, D160, and H164.

Belongs to the iron/manganese superoxide dismutase family. Mn(2+) serves as cofactor.

The protein localises to the secreted. The catalysed reaction is 2 superoxide + 2 H(+) = H2O2 + O2. Destroys superoxide anion radicals which are normally produced within the cells and which are toxic to biological systems. This is Superoxide dismutase [Mn] (sodA) from Mycolicibacterium paratuberculosis (strain ATCC BAA-968 / K-10) (Mycobacterium paratuberculosis).